The chain runs to 174 residues: Serine protease 2 (174 aa).

A disulfide bridge connects residues C15 and C36. Catalysis depends on charge relay system residues H35, D65, and S147. A disulfide bridge links C141 with C168.

This sequence belongs to the peptidase S1 family.

The protein localises to the secreted. In terms of biological role, broad substrate specificity. This chain is Serine protease 2, found in Streptomyces fradiae (Streptomyces roseoflavus).